A 34-amino-acid polypeptide reads, in one-letter code: Photosystem I reaction center subunit XII (34 aa).

The helical transmembrane segment at 10–32 threads the bilayer; it reads IYIALVVAAHAAILALRLSVSLY.

Belongs to the PsaM family.

Its subcellular location is the cellular thylakoid membrane. The polypeptide is Photosystem I reaction center subunit XII (Synechococcus sp. (strain RCC307)).